A 616-amino-acid polypeptide reads, in one-letter code: Dihydroxy-acid dehydratase (616 aa).

Asp81 is a binding site for Mg(2+). Cys122 is a binding site for [2Fe-2S] cluster. Mg(2+) is bound by residues Asp123 and Lys124. At Lys124 the chain carries N6-carboxylysine. Cys195 contacts [2Fe-2S] cluster. Residue Glu491 participates in Mg(2+) binding. The active-site Proton acceptor is Ser517.

It belongs to the IlvD/Edd family. Homodimer. Requires [2Fe-2S] cluster as cofactor. Mg(2+) serves as cofactor.

It carries out the reaction (2R)-2,3-dihydroxy-3-methylbutanoate = 3-methyl-2-oxobutanoate + H2O. It catalyses the reaction (2R,3R)-2,3-dihydroxy-3-methylpentanoate = (S)-3-methyl-2-oxopentanoate + H2O. The protein operates within amino-acid biosynthesis; L-isoleucine biosynthesis; L-isoleucine from 2-oxobutanoate: step 3/4. Its pathway is amino-acid biosynthesis; L-valine biosynthesis; L-valine from pyruvate: step 3/4. Functions in the biosynthesis of branched-chain amino acids. Catalyzes the dehydration of (2R,3R)-2,3-dihydroxy-3-methylpentanoate (2,3-dihydroxy-3-methylvalerate) into 2-oxo-3-methylpentanoate (2-oxo-3-methylvalerate) and of (2R)-2,3-dihydroxy-3-methylbutanoate (2,3-dihydroxyisovalerate) into 2-oxo-3-methylbutanoate (2-oxoisovalerate), the penultimate precursor to L-isoleucine and L-valine, respectively. The polypeptide is Dihydroxy-acid dehydratase (Shigella flexneri).